We begin with the raw amino-acid sequence, 54 residues long: uncharacterized protein (54 aa).

This is an uncharacterized protein from Rhizobium etli.